Reading from the N-terminus, the 202-residue chain is Adenosylcobalamin/alpha-ribazole phosphatase (202 aa).

Histidine 8 serves as the catalytic Tele-phosphohistidine intermediate. Residue glutamate 81 is the Proton donor/acceptor of the active site.

Belongs to the phosphoglycerate mutase family. As to quaternary structure, monomer.

It catalyses the reaction adenosylcob(III)alamin 5'-phosphate + H2O = adenosylcob(III)alamin + phosphate. The catalysed reaction is alpha-ribazole 5'-phosphate + H2O = alpha-ribazole + phosphate. It participates in nucleoside biosynthesis; alpha-ribazole biosynthesis; alpha-ribazole from 5,6-dimethylbenzimidazole: step 2/2. Its function is as follows. Catalyzes the conversion of adenosylcobalamin 5'-phosphate to adenosylcobalamin (vitamin B12); involved in the assembly of the nucleotide loop of cobalamin. Also catalyzes the hydrolysis of the phospho group from alpha-ribazole 5'-phosphate to form alpha-ribazole. This chain is Adenosylcobalamin/alpha-ribazole phosphatase (cobC), found in Salmonella typhimurium (strain LT2 / SGSC1412 / ATCC 700720).